Reading from the N-terminus, the 602-residue chain is Oligoendopeptidase F, chromosomal (602 aa).

Position 388 (His388) interacts with Zn(2+). The active site involves Glu389. The Zn(2+) site is built by His392 and His395.

This sequence belongs to the peptidase M3B family. Requires Zn(2+) as cofactor.

Hydrolyzes peptides containing between 7 and 17 amino acids with a rather wide specificity. This chain is Oligoendopeptidase F, chromosomal (pepF2), found in Lactococcus lactis subsp. cremoris (Streptococcus cremoris).